Consider the following 481-residue polypeptide: Cobyric acid synthase (481 aa).

One can recognise a GATase cobBQ-type domain in the interval 248-435 (ALTVAWLAFS…LHGMFGADGF (188 aa)). Catalysis depends on Cys-330, which acts as the Nucleophile. The active site involves His-427.

Belongs to the CobB/CobQ family. CobQ subfamily.

It participates in cofactor biosynthesis; adenosylcobalamin biosynthesis. In terms of biological role, catalyzes amidations at positions B, D, E, and G on adenosylcobyrinic A,C-diamide. NH(2) groups are provided by glutamine, and one molecule of ATP is hydrogenolyzed for each amidation. The sequence is that of Cobyric acid synthase from Cereibacter sphaeroides (strain ATCC 17023 / DSM 158 / JCM 6121 / CCUG 31486 / LMG 2827 / NBRC 12203 / NCIMB 8253 / ATH 2.4.1.) (Rhodobacter sphaeroides).